The chain runs to 76 residues: DNA gyrase inhibitor YacG (76 aa).

The Zn(2+) site is built by C7, C10, C26, and C30.

This sequence belongs to the DNA gyrase inhibitor YacG family. Interacts with GyrB. Zn(2+) serves as cofactor.

In terms of biological role, inhibits all the catalytic activities of DNA gyrase by preventing its interaction with DNA. Acts by binding directly to the C-terminal domain of GyrB, which probably disrupts DNA binding by the gyrase. This chain is DNA gyrase inhibitor YacG, found in Pseudoalteromonas translucida (strain TAC 125).